We begin with the raw amino-acid sequence, 354 residues long: S-adenosylmethionine:tRNA ribosyltransferase-isomerase (354 aa).

The protein belongs to the QueA family. In terms of assembly, monomer.

It is found in the cytoplasm. It carries out the reaction 7-aminomethyl-7-carbaguanosine(34) in tRNA + S-adenosyl-L-methionine = epoxyqueuosine(34) in tRNA + adenine + L-methionine + 2 H(+). Its pathway is tRNA modification; tRNA-queuosine biosynthesis. Transfers and isomerizes the ribose moiety from AdoMet to the 7-aminomethyl group of 7-deazaguanine (preQ1-tRNA) to give epoxyqueuosine (oQ-tRNA). The protein is S-adenosylmethionine:tRNA ribosyltransferase-isomerase of Pseudomonas syringae pv. syringae (strain B728a).